A 134-amino-acid chain; its full sequence is Methylglyoxal synthase (134 aa).

In terms of domain architecture, MGS-like spans 1–134; it reads MHIALIAHDE…DWRDLRRNDE (134 aa). Substrate contacts are provided by residues His-8, Lys-12, 34–37, and 54–55; these read TGTT and SG. Asp-60 (proton donor/acceptor) is an active-site residue. His-87 contributes to the substrate binding site.

It belongs to the methylglyoxal synthase family.

It catalyses the reaction dihydroxyacetone phosphate = methylglyoxal + phosphate. Functionally, catalyzes the formation of methylglyoxal from dihydroxyacetone phosphate. This is Methylglyoxal synthase from Listeria innocua serovar 6a (strain ATCC BAA-680 / CLIP 11262).